The chain runs to 217 residues: Probable transaldolase (217 aa).

Catalysis depends on Lys-83, which acts as the Schiff-base intermediate with substrate.

The protein belongs to the transaldolase family. Type 3B subfamily.

It is found in the cytoplasm. It carries out the reaction D-sedoheptulose 7-phosphate + D-glyceraldehyde 3-phosphate = D-erythrose 4-phosphate + beta-D-fructose 6-phosphate. It participates in carbohydrate degradation; pentose phosphate pathway; D-glyceraldehyde 3-phosphate and beta-D-fructose 6-phosphate from D-ribose 5-phosphate and D-xylulose 5-phosphate (non-oxidative stage): step 2/3. In terms of biological role, transaldolase is important for the balance of metabolites in the pentose-phosphate pathway. In Rhizobium meliloti (strain 1021) (Ensifer meliloti), this protein is Probable transaldolase.